The chain runs to 196 residues: MEARLVLGSSSERRKAVLESFRIPFICVSPDFDERSIVYSGDPFEYTKELAWNKANVVRSQGFSDALIITADTVVVYKGEVFNKPESEEHAVEMLRTLSGSSHSVITTLVLMQNEKVLSASENTQVSFIDIPPQHLKTYVRSFSSLKRCGGYCVQDGGGLIIKQIEGCVYNIQGLPIKTLNQLLMEFNISLWDYLV.

D72 serves as the catalytic Proton acceptor.

This sequence belongs to the Maf family. YhdE subfamily. A divalent metal cation serves as cofactor.

The protein resides in the cytoplasm. It carries out the reaction dTTP + H2O = dTMP + diphosphate + H(+). The enzyme catalyses UTP + H2O = UMP + diphosphate + H(+). Functionally, nucleoside triphosphate pyrophosphatase that hydrolyzes dTTP and UTP. May have a dual role in cell division arrest and in preventing the incorporation of modified nucleotides into cellular nucleic acids. The polypeptide is dTTP/UTP pyrophosphatase (Chlamydia trachomatis serovar A (strain ATCC VR-571B / DSM 19440 / HAR-13)).